Here is a 196-residue protein sequence, read N- to C-terminus: Large ribosomal subunit protein uL18 (196 aa).

Belongs to the universal ribosomal protein uL18 family. Part of the 50S ribosomal subunit. Contacts the 5S and 23S rRNAs.

In terms of biological role, this is one of the proteins that bind and probably mediate the attachment of the 5S RNA into the large ribosomal subunit, where it forms part of the central protuberance. The polypeptide is Large ribosomal subunit protein uL18 (Thermofilum pendens (strain DSM 2475 / Hrk 5)).